Here is a 463-residue protein sequence, read N- to C-terminus: L-seryl-tRNA(Sec) selenium transferase (463 aa).

An N6-(pyridoxal phosphate)lysine modification is found at lysine 295.

Belongs to the SelA family. As to quaternary structure, homodecamer; pentamer of dimers. Binds only one seryl-tRNA(Sec) per dimer. Requires pyridoxal 5'-phosphate as cofactor.

The protein resides in the cytoplasm. It carries out the reaction L-seryl-tRNA(Sec) + selenophosphate + H(+) = L-selenocysteinyl-tRNA(Sec) + phosphate. It participates in aminoacyl-tRNA biosynthesis; selenocysteinyl-tRNA(Sec) biosynthesis; selenocysteinyl-tRNA(Sec) from L-seryl-tRNA(Sec) (bacterial route): step 1/1. In terms of biological role, converts seryl-tRNA(Sec) to selenocysteinyl-tRNA(Sec) required for selenoprotein biosynthesis. The polypeptide is L-seryl-tRNA(Sec) selenium transferase (Shigella sonnei (strain Ss046)).